The chain runs to 358 residues: Probable isocitrate dehydrogenase [NAD] subunit alpha, mitochondrial (358 aa).

Arg108, Arg118, Arg139, and Asp226 together coordinate substrate. 3 residues coordinate Mg(2+): Asp226, Asp250, and Asp254.

It belongs to the isocitrate and isopropylmalate dehydrogenases family. As to quaternary structure, heterooligomer of subunits alpha, beta, and gamma in the apparent ratio of 2:1:1. The cofactor is Mg(2+). Requires Mn(2+) as cofactor.

It localises to the mitochondrion. The catalysed reaction is D-threo-isocitrate + NAD(+) = 2-oxoglutarate + CO2 + NADH. This is Probable isocitrate dehydrogenase [NAD] subunit alpha, mitochondrial (idha-1) from Caenorhabditis elegans.